We begin with the raw amino-acid sequence, 354 residues long: Alpha-D-ribose 1-methylphosphonate 5-triphosphate synthase subunit PhnI (354 aa).

The protein belongs to the PhnI family. Forms a complex with PhnG, PhnH, PhnJ and PhnK with the suggested composition PhnG(4)H(2)I(2)J(2)K.

The catalysed reaction is methylphosphonate + ATP = alpha-D-ribose 1-methylphosphonate 5-triphosphate + adenine. It catalyses the reaction ATP + H2O = D-ribose 5-triphosphate + adenine. Together with PhnG, PhnH and PhnL is required for the transfer of the ribose triphosphate moiety from ATP to methyl phosphonate. PhnI alone has nucleosidase activity, catalyzing the hydrolysis of ATP or GTP forming alpha-D-ribose 5-triphosphate and adenine or guanine, respectively. This Escherichia coli (strain K12) protein is Alpha-D-ribose 1-methylphosphonate 5-triphosphate synthase subunit PhnI (phnI).